The following is a 740-amino-acid chain: ATP-dependent DNA helicase Hel308 (740 aa).

ATP-binding positions include Gln-28 and 46 to 53; that span reads IPTASGKT. The region spanning 33 to 204 is the Helicase ATP-binding domain; it reads RQGLLDGKNL…WMDAALVQSE (172 aa). Residues 149 to 152 carry the DEAH box motif; it reads DEVH. A Helicase C-terminal domain is found at 236–436; sequence EVNSLVADTL…EPAMRAHALS (201 aa). The interval 716-740 is disordered; sequence VDHTPPETEEQPQVSGQSTLFSFDG. Residues 726 to 740 are compositionally biased toward polar residues; sequence QPQVSGQSTLFSFDG.

Belongs to the helicase family. Hel308 subfamily. In terms of assembly, monomer.

It carries out the reaction Couples ATP hydrolysis with the unwinding of duplex DNA by translocating in the 3'-5' direction.. The enzyme catalyses ATP + H2O = ADP + phosphate + H(+). Functionally, DNA-dependent ATPase and 3'-5' DNA helicase that may be involved in repair of stalled replication forks. In Methanocella arvoryzae (strain DSM 22066 / NBRC 105507 / MRE50), this protein is ATP-dependent DNA helicase Hel308.